Consider the following 658-residue polypeptide: DNA mismatch repair protein MutL (658 aa).

The span at 114–130 (RQEDSSHATQVKAEDGK) shows a compositional bias: basic and acidic residues. Disordered stretches follow at residues 114–137 (RQED…PTAA) and 369–391 (DYPT…TAPM).

Belongs to the DNA mismatch repair MutL/HexB family.

This protein is involved in the repair of mismatches in DNA. It is required for dam-dependent methyl-directed DNA mismatch repair. May act as a 'molecular matchmaker', a protein that promotes the formation of a stable complex between two or more DNA-binding proteins in an ATP-dependent manner without itself being part of a final effector complex. The chain is DNA mismatch repair protein MutL from Neisseria meningitidis serogroup C (strain 053442).